Here is an 82-residue protein sequence, read N- to C-terminus: Small ribosomal subunit protein bS20 (82 aa).

The protein belongs to the bacterial ribosomal protein bS20 family.

Binds directly to 16S ribosomal RNA. In Lysinibacillus sphaericus (strain C3-41), this protein is Small ribosomal subunit protein bS20.